The primary structure comprises 372 residues: SAM domain-containing protein SAMSN-1 (372 aa).

The disordered stretch occupies residues 1 to 71 (MLKRKPSNAS…SGGSLGKKVR (71 aa)). An Important for interaction with 14-3-3 proteins motif is present at residues 20–25 (RSSSFG). A phosphoserine mark is found at Ser23 and Ser34. Residues 37 to 49 (KSDDSIEVHDREL) are compositionally biased toward basic and acidic residues. The span at 52 to 63 (GSEEQSKTSSSG) shows a compositional bias: low complexity. Ser74 carries the post-translational modification Phosphoserine. A Phosphothreonine modification is found at Thr76. Phosphoserine is present on residues Ser90, Ser97, and Ser119. The disordered stretch occupies residues 90 to 111 (SEEKEEESGEEALPYRNSDPMI). Over residues 129 to 146 (LYSGQSSSSGITSCSDGT) the composition is skewed to low complexity. The segment at 129 to 153 (LYSGQSSSSGITSCSDGTSNRDSFR) is disordered. Position 160 is a phosphotyrosine (Tyr160). Residues 163-224 (PFCGRAKVHT…KFIYVDVILE (62 aa)) enclose the SH3 domain. The SAM domain occupies 241 to 305 (ENHQTIQEFL…LSAAESLLDE (65 aa)). The segment at 304–372 (DEETTVEHEK…QKIAITESSD (69 aa)) is disordered. Positions 317–329 (PLSSNPDILSASQ) are enriched in polar residues.

As to quaternary structure, interacts with FASLG. Interacts with phosphotyrosine containing proteins. Interacts (via SH3 domain) with CTTN. Interacts (phosphorylated at Ser-23) with YWHAB, YWHAE, YWHAG, YWHAH, YWHAZ and SFN. Interacts directly with SAP30 and HDAC1. Identified in a complex with SAP30 and HDAC1. Detected in spleen and lymph node (at protein level).

The protein resides in the nucleus. It localises to the cytoplasm. It is found in the cell projection. The protein localises to the ruffle. Functionally, negative regulator of B-cell activation. Down-regulates cell proliferation (in vitro). Promotes RAC1-dependent membrane ruffle formation and reorganization of the actin cytoskeleton. Regulates cell spreading and cell polarization. Stimulates HDAC1 activity. Regulates LYN activity by modulating its tyrosine phosphorylation. The sequence is that of SAM domain-containing protein SAMSN-1 (Samsn1) from Mus musculus (Mouse).